The following is a 173-amino-acid chain: bZIP transcription factor 44 (173 aa).

A disordered region spans residues 1–65 (MNNKTEMGSS…SRMRKQKHLD (65 aa)). Low complexity predominate over residues 8-22 (GSSTSGNCSSVSTTG). Residues 30-41 (SDLRQRDLIDER) are compositionally biased toward basic and acidic residues. The bZIP domain maps to 39–102 (DERKRKRKQS…VTIEAENDIL (64 aa)). Residues 41–62 (RKRKRKQSNRESARRSRMRKQK) are basic motif. The leucine-zipper stretch occupies residues 67 to 81 (LTAQVTHLRKENAQI).

Forms heterodimers with BZIP1, BZIP9, BZIP10, BZIP25 and BZIP63. As to expression, expressed in the micropylar endosperm and radicle tip in early germinating seeds.

It localises to the nucleus. Transcription factor that binds to the DNA G-box motif 5'-CACGTG-3' of MAN7 promoter. Involved in the positive regulation of seed germination through MAN7 gene activation. MAN7 is required for both, loosening of the micropylar endosperm, and rupture of the seed coat in germinating seeds. This Arabidopsis thaliana (Mouse-ear cress) protein is bZIP transcription factor 44.